A 184-amino-acid chain; its full sequence is NADH-quinone oxidoreductase subunit B 1 (184 aa).

[4Fe-4S] cluster contacts are provided by cysteine 37, cysteine 38, cysteine 103, and cysteine 132.

Belongs to the complex I 20 kDa subunit family. As to quaternary structure, NDH-1 is composed of 14 different subunits. Subunits NuoB, C, D, E, F, and G constitute the peripheral sector of the complex. [4Fe-4S] cluster is required as a cofactor.

The protein localises to the cell membrane. The catalysed reaction is a quinone + NADH + 5 H(+)(in) = a quinol + NAD(+) + 4 H(+)(out). In terms of biological role, NDH-1 shuttles electrons from NADH, via FMN and iron-sulfur (Fe-S) centers, to quinones in the respiratory chain. The immediate electron acceptor for the enzyme in this species is believed to be a menaquinone. Couples the redox reaction to proton translocation (for every two electrons transferred, four hydrogen ions are translocated across the cytoplasmic membrane), and thus conserves the redox energy in a proton gradient. This Streptomyces coelicolor (strain ATCC BAA-471 / A3(2) / M145) protein is NADH-quinone oxidoreductase subunit B 1.